A 311-amino-acid chain; its full sequence is Probable protein phosphatase 2C 59 (311 aa).

The span at 1 to 14 (MGYLNSVLSSSSQV) shows a compositional bias: low complexity. Residues 1-26 (MGYLNSVLSSSSQVHSDDGPVSGGGL) are disordered. The PPM-type phosphatase domain occupies 33–279 (SYGYASSPGK…DNITCVVVRF (247 aa)). Residues D69, G70, D231, and D270 each coordinate Mn(2+).

This sequence belongs to the PP2C family. Interacts with the Pseudomonas syringae pv. maculicola effector HopW1-1 (via C-terminus). Mg(2+) is required as a cofactor. The cofactor is Mn(2+).

It carries out the reaction O-phospho-L-seryl-[protein] + H2O = L-seryl-[protein] + phosphate. The catalysed reaction is O-phospho-L-threonyl-[protein] + H2O = L-threonyl-[protein] + phosphate. Inhibited by sodium fluoride (NaF). Protein phosphatase that modulates defense response to pathogenic bacteria, conferring resistance and promoting salicylic acid (SA) accumulation. This Arabidopsis thaliana (Mouse-ear cress) protein is Probable protein phosphatase 2C 59 (WIN2).